The primary structure comprises 618 residues: Zinc finger protein 48 (618 aa).

Met1 carries the N-acetylmethionine modification. Composition is skewed to basic and acidic residues over residues 1 to 22 and 39 to 51; these read MERAVEPWGPDLHRPEEREPQR and EFEHTPQEDDLGF. 2 disordered regions span residues 1–51 and 78–109; these read MERA…DLGF and LWVQREGLGKPQPRDRGPRLLGEPRWGQASSD. Lys87 is covalently cross-linked (Glycyl lysine isopeptide (Lys-Gly) (interchain with G-Cter in SUMO2)). 2 C2H2-type zinc fingers span residues 112-134 and 140-162; these read AVCGECGKSFRQMSDLVKHQRTH and YKCGVCGKGFGDSSARIKHQRTH. Residues 157–189 form a disordered region; the sequence is KHQRTHSGEKPYRARPPAQGPPKIPRSRIPAGE. A Glycyl lysine isopeptide (Lys-Gly) (interchain with G-Cter in SUMO2) cross-link involves residue Lys179. 2 consecutive C2H2-type zinc fingers follow at residues 192 to 214 and 220 to 242; these read TICGECGKSFRQSSDLVKHQRTH and YKCGICGKGFGDSSARIKHQRTH. The interval 235–271 is disordered; it reads RIKHQRTHRGEQPPRPVVPRRQPSRAATAATQGPKAQ. Lys269 is covalently cross-linked (Glycyl lysine isopeptide (Lys-Gly) (interchain with G-Cter in SUMO2)). C2H2-type zinc fingers lie at residues 275-297 and 303-325; these read YICTDCGKRFVLSCSLLSHQRSH and FGCDVCGKEFARGSDLVKHLRVH. Lys329 is covalently cross-linked (Glycyl lysine isopeptide (Lys-Gly) (interchain with G-Cter in SUMO2)). C2H2-type zinc fingers lie at residues 331–353 and 359–381; these read YLCPECGKGFADSSARVKHLRTH and HACPECDRTFSLSSTLLRHRLTH. The span at 392-414 shows a compositional bias: pro residues; it reads YPLPALIPSPPPPPLGTSPPLTP. The tract at residues 392–457 is disordered; that stretch reads YPLPALIPSP…DKPHKCPECG (66 aa). The segment covering 415–432 has biased composition (low complexity); sequence RSPSHSGEPFGLPGLEPE. Residues 451 to 473 form a C2H2-type 9 zinc finger; it reads HKCPECGKGFRRSSDLVKHHRVH. Lys477 participates in a covalent cross-link: Glycyl lysine isopeptide (Lys-Gly) (interchain with G-Cter in SUMO2). The C2H2-type 10 zinc-finger motif lies at 479–501; that stretch reads YLCPECGKGFADSSARVKHLRTH. A disordered region spans residues 500 to 540; that stretch reads THRGERARPPPPSTLLRPHNPPGPVPMAPRPRVRAQPSGPS. The span at 508-528 shows a compositional bias: pro residues; it reads PPPPSTLLRPHNPPGPVPMAP. 2 consecutive C2H2-type zinc fingers follow at residues 543–565 and 571–593; these read HVCGFCGKEFPRSSDLVKHRRTH and YKCAECGKGFGDSSARIKHQRGH. Lys610 participates in a covalent cross-link: Glycyl lysine isopeptide (Lys-Gly) (interchain with G-Cter in SUMO2).

This sequence belongs to the krueppel C2H2-type zinc-finger protein family.

It is found in the nucleus. In terms of biological role, may be involved in transcriptional regulation. The sequence is that of Zinc finger protein 48 (ZNF48) from Homo sapiens (Human).